The primary structure comprises 286 residues: Polyamine aminopropyltransferase (286 aa).

Positions 5–238 constitute a PABS domain; the sequence is TMWHETLHDQ…GIMTFAWATD (234 aa). Gln33 contributes to the S-methyl-5'-thioadenosine binding site. Residues His64 and Asp88 each contribute to the spermidine site. S-methyl-5'-thioadenosine is bound by residues Glu108 and 140–141; that span reads DG. The active-site Proton acceptor is the Asp158. 158-161 contributes to the spermidine binding site; it reads DCTD. Pro165 lines the S-methyl-5'-thioadenosine pocket.

This sequence belongs to the spermidine/spermine synthase family. As to quaternary structure, homodimer or homotetramer.

Its subcellular location is the cytoplasm. It carries out the reaction S-adenosyl 3-(methylsulfanyl)propylamine + putrescine = S-methyl-5'-thioadenosine + spermidine + H(+). It participates in amine and polyamine biosynthesis; spermidine biosynthesis; spermidine from putrescine: step 1/1. In terms of biological role, catalyzes the irreversible transfer of a propylamine group from the amino donor S-adenosylmethioninamine (decarboxy-AdoMet) to putrescine (1,4-diaminobutane) to yield spermidine. In Salmonella paratyphi A (strain ATCC 9150 / SARB42), this protein is Polyamine aminopropyltransferase.